The following is a 394-amino-acid chain: Ornithine aminotransferase 1 (394 aa).

Position 252 is an N6-(pyridoxal phosphate)lysine (Lys252).

It belongs to the class-III pyridoxal-phosphate-dependent aminotransferase family. OAT subfamily. The cofactor is pyridoxal 5'-phosphate.

It is found in the cytoplasm. It carries out the reaction a 2-oxocarboxylate + L-ornithine = L-glutamate 5-semialdehyde + an L-alpha-amino acid. It participates in amino-acid biosynthesis; L-proline biosynthesis; L-glutamate 5-semialdehyde from L-ornithine: step 1/1. In terms of biological role, catalyzes the interconversion of ornithine to glutamate semialdehyde. The sequence is that of Ornithine aminotransferase 1 from Staphylococcus aureus (strain COL).